The following is a 309-amino-acid chain: Tagatose-6-phosphate kinase (309 aa).

This sequence belongs to the carbohydrate kinase PfkB family. LacC subfamily.

It carries out the reaction D-tagatofuranose 6-phosphate + ATP = D-tagatofuranose 1,6-bisphosphate + ADP + H(+). The protein operates within carbohydrate metabolism; D-tagatose 6-phosphate degradation; D-glyceraldehyde 3-phosphate and glycerone phosphate from D-tagatose 6-phosphate: step 1/2. The protein is Tagatose-6-phosphate kinase of Streptococcus pneumoniae (strain ATCC 700669 / Spain 23F-1).